The sequence spans 101 residues: Urease subunit beta (101 aa).

The protein belongs to the urease beta subunit family. As to quaternary structure, heterotrimer of UreA (gamma), UreB (beta) and UreC (alpha) subunits. Three heterotrimers associate to form the active enzyme.

The protein localises to the cytoplasm. It carries out the reaction urea + 2 H2O + H(+) = hydrogencarbonate + 2 NH4(+). It functions in the pathway nitrogen metabolism; urea degradation; CO(2) and NH(3) from urea (urease route): step 1/1. This chain is Urease subunit beta, found in Leptothrix cholodnii (strain ATCC 51168 / LMG 8142 / SP-6) (Leptothrix discophora (strain SP-6)).